A 2167-amino-acid polypeptide reads, in one-letter code: MKGLLWSKNRKSSTASASSSSTSTSHKTTTASTASSSSPSSSSQTIRNSTSGASPYMHSHHHHGQGHSHHRGEDNNRDKRKSSVFPPSKQYTSTSSSQVNLGMYHSDTNTRSSRSIASTLKDDSPSVCSEDEISNSSSQKSNAQDETPIAYKKSAHSKDSLLPSRSSSLSPPQSRCSTGTTLEKSLNTSGISNSSGTNNNNSNNNNDNEQKQRNVIHLNSENYDTTVFKTGWVNKSHGQTVATNYNSSMTAPSSSSSSSSQNLRNDAYSRNRESRFYGNDGSSLKNDDSSSTTATNSGNDVASARSSMAIDPQMLVPDYRLYRAQLKGCVLNLYKSGLNSNIKFFDPTLPASNSSIANENHQQKKQQTNNQAQAEALHQKQSFGQMGEPITLDLKYLSEVYPHPDLRQDSDGKIISGTIESLCHTVLFYPGPKQSDVPNEKSLSKTHRAVINLLLMFPLLDHFIKFLKVFNQFGLSFTKNKSRLTNNSTQFYNISPAVDDSMTQRLALTAKTILDVFPGFLLDEPMLKTIISLLDTISLHNDEISNNLKIKIANKHNELMKLTAFTRSLPMATSSTHELEIILDPSHFLSLDITTLADEVHHINLKFDKVWAPKFDYSLLYDSKFINRRIVSLNPLVFNNDQNIHFLGRLLISHLFPTNPEFSKKVTPKVRAELLDKWVQIGCRFEHLGDMVSWLAVATIICSIPVLRSSSWKYVPDQSLKTIFKDWVPTIIQLERRQRTSKSTSSVFILAPPNLDDDFTRANVISYFGDLLIHADDLPSDTKFKYLEKKINRTKNAFHKWQQRLQAIDSTRHKTNSTENVRDNDSPNNVVYQLWKFHLSQPPLNIEGIMKLSVQHEPPIIDQKAYSTIGSQRSALVTGSYLPILFNELFPNYSLFPKNTLVGAASDAKLPPPRSSARLSKSLSISEPIPIASNSHTMGSLTDDAMSSKNDNNKVTGVGKIDGPVIKEMSSKQSNKQRLLKSVRDVFNIDMDVFHISDELVFKSVYDNDGKSRPASMVIETPKRFSQHSSMLINNPATPNQKMRDSLDTTGRLSKTLENMDFFNNIGQVSDSLKESIIRVVLKSSSLEKIFDLLVLTSNIFSKLVDTKDLENYYYHQRQRGHSTRGLSDDNIGLLDYAFVKLTMDNDIFTETFFNTYKSFTTTTTVLENMAKRYVGAKSCSVSISKILDRSDDSKMKINEDTNLVSSSLYDQNFPVWDMKVTDDENINLIYMAKIQIGAAEAILHLVKNHYSDFTDDLCNNSTLLDIIKIMEQEVSTEWPTRIANSKLQKSLPENFVIETENLLTTLTDLFHGIKSAYQKQLYRPIGVNRTQKRITDILNSFNTFSFTDLNNIIDDPSFSDDMIRSFQKLHSTNYEDILEWIYQLDNFISKKFNLVSKKDWIVLFQELELLSKESLVSFFNYPLHFKSSKLINPGYLQLHEFEISNLFTWISTLILKDDNGTESLFFEKLPQSIKLLIKLHTSLTTFFVMEISNVNKSSSERLTTCKVILQILNYIRWKNGSLDLFDSEEDESPHAICPHIPAFIETAIAHAIISPESRNYELSWIKASEKLSDPTKGTQNLRSISNVLEKIDDIHIKRFIEIDDVFSKNCKNLCPCPGWFISRLLEISQFVPNMSITNSKLINFDKRRFVNNIISNVLDLIPNEREFPLDIEMSDENPSKRTTFGRILFNNFEDVNKVYRKKTKKVSESEAISERFQEQGVFNEILVNEIEKIKREARKLEVLLDQEKILKNSAALHQAVPKKNRKSVIISGTHSDNDHSYNINKNTGQTPSLGSVMESNNSARNRRDSRASFSTNRSSVVSNSSHNGVSKKIGGFFRRPFSIGGFNTSSSNYSLNSILSQEVSSNKSILPSILPEVDSMQLHDLKPSYSLKTFEIKSIMEIINHRNIPAYYYAFKIVMQNGHEYLIQTASSSDLTEWIKMIKASKRFSFHSKKYKGKTHNKIFGVPLEDVCERENTLIPTIVVKLLEEIELRGLDEVGLYRIPGSIGSINALKNAFDEEGATDNSFTLEDDRWFEVNAIAGCFKMYLRELPDSLFSHAMVNDFTDLAIKYKAHAMVNEEYKRMMNELLQKLPTCYYQTLKRIVFHLNKVHQHVVNNKMDASNLAIVFSMSFINQEDLANSMGSRLGAVQTILQDFIKNPNDYFKQ.

Disordered stretches follow at residues 1-209 (MKGL…NDNE), 243-305 (TNYN…ASAR), and 353-372 (NSSIANENHQQKKQQTNNQA). Residues 12 to 51 (SSTASASSSSTSTSHKTTTASTASSSSPSSSSQTIRNSTS) show a composition bias toward low complexity. Residue K27 forms a Glycyl lysine isopeptide (Lys-Gly) (interchain with G-Cter in ubiquitin) linkage. Residues 58–70 (HSHHHHGQGHSHH) are compositionally biased toward basic residues. Positions 89-118 (KQYTSTSSSQVNLGMYHSDTNTRSSRSIAS) are enriched in polar residues. A Phosphoserine modification is found at S129. A compositionally biased stretch (polar residues) spans 134–145 (SNSSSQKSNAQD). 2 stretches are compositionally biased toward low complexity: residues 160-177 (SLLPSRSSSLSPPQSRCS) and 187-207 (NTSGISNSSGTNNNNSNNNND). Over residues 243 to 252 (TNYNSSMTAP) the composition is skewed to polar residues. Residue S283 is modified to Phosphoserine. Residues 289–300 (SSSTTATNSGND) are compositionally biased toward low complexity. One can recognise a Ras-GEF domain in the interval 592-859 (DITTLADEVH…MKLSVQHEPP (268 aa)). S1012 and S1016 each carry phosphoserine. Position 1038 is a phosphothreonine (T1038). S1046, S1054, and S1128 each carry phosphoserine. A compositionally biased stretch (polar residues) spans 1771–1794 (ISGTHSDNDHSYNINKNTGQTPSL). Residues 1771-1828 (ISGTHSDNDHSYNINKNTGQTPSLGSVMESNNSARNRRDSRASFSTNRSSVVSNSSHN) are disordered. The segment covering 1812-1828 (ASFSTNRSSVVSNSSHN) has biased composition (low complexity). One can recognise a PH domain in the interval 1846-1948 (GFNTSSSNYS…WIKMIKASKR (103 aa)). Residues 1967–2165 (VPLEDVCERE…DFIKNPNDYF (199 aa)) enclose the Rho-GAP domain.

In terms of biological role, GTPase-activating protein (GAP) for RHO1 and RHO2. Involved in the control of cellular morphogenesis. Required for proper bud site selection and bud emergence. The sequence is that of GTPase-activating protein BEM2/IPL2 (BEM2) from Saccharomyces cerevisiae (strain ATCC 204508 / S288c) (Baker's yeast).